The chain runs to 471 residues: Tyrosine--tRNA ligase, mitochondrial (471 aa).

Y71 provides a ligand contact to L-tyrosine. D75 contacts ATP. The 'HIGH' region signature appears at 76-85 (PTGDSLHVGH). D115, Y215, Q219, D222, and Q241 together coordinate L-tyrosine. The ATP site is built by I268 and K278. The 'KMSKS' region signature appears at 275–279 (KLGKS). An N6-acetyllysine mark is found at K349 and K361.

Belongs to the class-I aminoacyl-tRNA synthetase family. Homodimer.

Its subcellular location is the mitochondrion matrix. The enzyme catalyses tRNA(Tyr) + L-tyrosine + ATP = L-tyrosyl-tRNA(Tyr) + AMP + diphosphate + H(+). In terms of biological role, catalyzes the attachment of tyrosine to tRNA(Tyr) in a two-step reaction: tyrosine is first activated by ATP to form Tyr-AMP and then transferred to the acceptor end of tRNA(Tyr). The chain is Tyrosine--tRNA ligase, mitochondrial (Yars2) from Rattus norvegicus (Rat).